We begin with the raw amino-acid sequence, 465 residues long: GTPase Der (465 aa).

2 consecutive EngA-type G domains span residues 3–166 (FLVA…LNEY) and 184–358 (IHFS…ACAN). Residues 9-16 (GRANVGKS), 56-60 (DTGGI), 118-121 (NKVD), 190-197 (GRPNVGKS), 237-241 (DTAGV), and 302-305 (NKWD) each bind GTP. Residues 359-443 (KKITTADATR…PIVFEFKQSE (85 aa)) form the KH-like domain. The segment at 446 to 465 (FADRKNKRSKDEGSKSKKVK) is disordered.

This sequence belongs to the TRAFAC class TrmE-Era-EngA-EngB-Septin-like GTPase superfamily. EngA (Der) GTPase family. In terms of assembly, associates with the 50S ribosomal subunit.

GTPase that plays an essential role in the late steps of ribosome biogenesis. This Francisella tularensis subsp. tularensis (strain WY96-3418) protein is GTPase Der.